A 256-amino-acid polypeptide reads, in one-letter code: Probable serine/threonine-protein kinase YbdM (256 aa).

The Protein kinase domain maps to tyrosine 25–threonine 256. ATP-binding positions include leucine 31–valine 39 and lysine 54. The Proton acceptor role is filled by aspartate 149.

It belongs to the protein kinase superfamily. Ser/Thr protein kinase family.

It carries out the reaction L-seryl-[protein] + ATP = O-phospho-L-seryl-[protein] + ADP + H(+). The catalysed reaction is L-threonyl-[protein] + ATP = O-phospho-L-threonyl-[protein] + ADP + H(+). The chain is Probable serine/threonine-protein kinase YbdM (ybdM) from Bacillus subtilis (strain 168).